We begin with the raw amino-acid sequence, 486 residues long: Histidine--tRNA ligase, chloroplastic/mitochondrial (486 aa).

Belongs to the class-II aminoacyl-tRNA synthetase family.

It localises to the plastid. Its subcellular location is the chloroplast. It is found in the mitochondrion. It catalyses the reaction tRNA(His) + L-histidine + ATP = L-histidyl-tRNA(His) + AMP + diphosphate + H(+). This Arabidopsis thaliana (Mouse-ear cress) protein is Histidine--tRNA ligase, chloroplastic/mitochondrial.